The chain runs to 351 residues: Spermidine/putrescine import ATP-binding protein PotA (351 aa).

In terms of domain architecture, ABC transporter spans 6-236; that stretch reads LELRNVTKEY…PENAWVANFI (231 aa). 38 to 45 provides a ligand contact to ATP; the sequence is GPSGCGKT.

This sequence belongs to the ABC transporter superfamily. Spermidine/putrescine importer (TC 3.A.1.11.1) family. In terms of assembly, the complex is composed of two ATP-binding proteins (PotA), two transmembrane proteins (PotB and PotC) and a solute-binding protein (PotD).

The protein localises to the cell membrane. The catalysed reaction is ATP + H2O + polyamine-[polyamine-binding protein]Side 1 = ADP + phosphate + polyamineSide 2 + [polyamine-binding protein]Side 1.. Functionally, part of the ABC transporter complex PotABCD involved in spermidine/putrescine import. Responsible for energy coupling to the transport system. In Mycoplasma mycoides subsp. mycoides SC (strain CCUG 32753 / NCTC 10114 / PG1), this protein is Spermidine/putrescine import ATP-binding protein PotA.